Reading from the N-terminus, the 119-residue chain is UPF0344 protein lp_1373 (119 aa).

The next 4 helical transmembrane spans lie at 1 to 21 (MYLL…AIGL), 32 to 52 (FLIL…ALAI), 60 to 80 (WLTL…EVAF), and 92 to 112 (LVTL…GLHW).

The protein belongs to the UPF0344 family.

Its subcellular location is the cell membrane. This is UPF0344 protein lp_1373 from Lactiplantibacillus plantarum (strain ATCC BAA-793 / NCIMB 8826 / WCFS1) (Lactobacillus plantarum).